A 205-amino-acid chain; its full sequence is Molybdenum cofactor guanylyltransferase (205 aa).

GTP is bound by residues 14–16 (LAG), lysine 27, aspartate 77, and aspartate 107. Aspartate 107 serves as a coordination point for Mg(2+).

This sequence belongs to the MobA family. As to quaternary structure, monomer. Requires Mg(2+) as cofactor.

It localises to the cytoplasm. The catalysed reaction is Mo-molybdopterin + GTP + H(+) = Mo-molybdopterin guanine dinucleotide + diphosphate. In terms of biological role, transfers a GMP moiety from GTP to Mo-molybdopterin (Mo-MPT) cofactor (Moco or molybdenum cofactor) to form Mo-molybdopterin guanine dinucleotide (Mo-MGD) cofactor. This chain is Molybdenum cofactor guanylyltransferase, found in Burkholderia vietnamiensis (strain G4 / LMG 22486) (Burkholderia cepacia (strain R1808)).